A 1097-amino-acid polypeptide reads, in one-letter code: MSSSALQIAKTATYLPDLVEVQRASFKWFLEKGLIEELKSFSPITDYTGKLELHFVGEEYRLKRPRHDVEEAKRRDATFASQMYVTCRLINKETGEIKEQEVFIGELPLMTERGTFIINGAERVIVNQIVRSPGVYFKDEMDKNGRRTYNASVIPNRGAWLKFETDKNNLLYVRVDKTRKINAHVLMRAMGLSDNDVVDKLRHPEFYKQSIDSANDEGINSEDQALLELYKKLRPGEPPSVSGGQQLLHSRFFDPKRYDLGRVGRYKINKKLRLTVPNEVRTLTHEDVLSTIDYLINLELDIGGASLDDIDHLGNRRVRSVGELLQNQVRVGLNRLERIIKERMTVGETDSLTPAQLVNPKPLVAAIKEFFGSSQLSQFMDQTNPLAELTHKRRISALGPGGLTRERAGFAVRDIHPSHYGRLCPIETPEGPNAGLINSLATHARVNEYGFIETPFWEVEKGRVMKEGNPVYLSADLEDECRVAPGDVATDKSGNILADLIPVRYRQDFEKVPPHQVDYVQLSPVQVISVATSLIPFLEHDDANRALMGSNMQRQAVPLLRPERPLVGTGLESQVARDSGMVPITKVNGIVSYVDANEIVVKDVDGNEHVHFLQKYQRSNQDTCLNQRPIVKNGDQVISGQVLADGSACEGGEIALGQNVLIAYMPWEGYNYEDAILVSERMVTDDLYTSVHIEKYEIEARQTKLGPEEITREIPNISEESLNNLDEMGIIRTGAFVESGDILVGKVTPKGESDQPPEEKLLRAIFGEKARDVRDNSLRVPKTEKGRVLDVRIYTREQGDELPPGANMVVRVYVAQRRKIQVGDKMAGRHGNKGIISRILPREDMPYLPDGTPVDIVLNPLGVPSRMNVGQVFELLMGWAASNLNCRVKVVPFDEMYGAEKSHQTVQAFLEEASKQDGKDWVYNPKDPGKLLLKDGRTGEPFDQPVAVGYSHFLKLVHLVDDKIHARSTGPYSLVTQQPLGGKAQQGGQRLGEMEVWALEAYGAAYTLQELLTVKSDDMQGRNEALNAIVKGKPIPRPGTPESFKVLMRELQSLGLDIGVYTDEGKEVDLMQDVNPKRNTPSRPTYESLGTSEYAED.

Residues 1071–1097 form a disordered region; sequence MQDVNPKRNTPSRPTYESLGTSEYAED. Over residues 1077–1091 the composition is skewed to polar residues; the sequence is KRNTPSRPTYESLGT.

This sequence belongs to the RNA polymerase beta chain family. As to quaternary structure, in cyanobacteria the RNAP catalytic core is composed of 2 alpha, 1 beta, 1 beta', 1 gamma and 1 omega subunit. When a sigma factor is associated with the core the holoenzyme is formed, which can initiate transcription.

It carries out the reaction RNA(n) + a ribonucleoside 5'-triphosphate = RNA(n+1) + diphosphate. Its function is as follows. DNA-dependent RNA polymerase catalyzes the transcription of DNA into RNA using the four ribonucleoside triphosphates as substrates. The sequence is that of DNA-directed RNA polymerase subunit beta from Prochlorococcus marinus subsp. pastoris (strain CCMP1986 / NIES-2087 / MED4).